We begin with the raw amino-acid sequence, 325 residues long: Glutarate 2-hydroxylase (325 aa).

Fe cation is bound by residues His-160, Asp-162, and His-292.

It belongs to the glutarate hydroxylase family. In terms of assembly, homotetramer. Requires Fe(2+) as cofactor.

It carries out the reaction glutarate + 2-oxoglutarate + O2 = (S)-2-hydroxyglutarate + succinate + CO2. It participates in amino-acid degradation. Functionally, acts as an alpha-ketoglutarate-dependent dioxygenase catalyzing hydroxylation of glutarate (GA) to L-2-hydroxyglutarate (L2HG). Functions in a L-lysine degradation pathway that proceeds via cadaverine, glutarate and L-2-hydroxyglutarate. The sequence is that of Glutarate 2-hydroxylase from Shigella boydii serotype 18 (strain CDC 3083-94 / BS512).